Here is a 642-residue protein sequence, read N- to C-terminus: Protein INCREASED PETAL GROWTH ANISOTROPY 1 (642 aa).

The interval 1–60 is disordered; it reads MVAGKVRVTMGFHKSPSTKKTKDMPSPLPLPPPPPPPLKPPSSGSATTKPPINPSKPGFT. The segment covering 26–40 has biased composition (pro residues); the sequence is SPLPLPPPPPPPLKP. A coiled-coil region spans residues 80 to 183; that stretch reads AASHNGVVSE…EAEIVELRKL (104 aa). The segment at 223–351 is disordered; it reads NLPEPITNQE…PPKSLSIASA (129 aa). Basic and acidic residues predominate over residues 247–256; that stretch reads DIYRKDEIES. The segment covering 258–277 has biased composition (low complexity); it reads SRSSNSEELTESSSLSTVRS. The segment covering 302-344 has biased composition (pro residues); the sequence is DPPPQKSIPPPPPPPPPPLLQQPPPPPSVSKAPPPPPPPPPPK.

It belongs to the IPGA1 family. Associates to cortical microtubules via its N-terminal region. Interacts with ANGUSTIFOLIA (AN) on microtubule upon mechanical stress to regulate microtubule organization. Binds to the microtubule-severing enzyme KATANIN (KTN1). As to expression, expressed ubiquitously at all development stages, with highest in developing petals. During mechanical stress, accumulates in granules on microtubules.

Its subcellular location is the cytoplasm. The protein resides in the cytoskeleton. It localises to the cytosol. The protein localises to the cell membrane. Functionally, microtubule-associated protein involved in the regulation of anisotropic petal and cotyledons growth and shape by affecting cortical microtubule organization. Prevents cortical microtubules organization into parallel arrays oriented perpendicular to the axis of cell elongation thus limiting anisotropic cell growth in the late phases of petal development. Cooperatively with ANGUSTIFOLIA (AN), negatively regulates cortical microtubules (CMTs) organization in response to mechanical stress and modulates pavement cells morphogenesis leading to puzzle shape, probably in an AAA1/KTN1-dependent manner. The chain is Protein INCREASED PETAL GROWTH ANISOTROPY 1 from Arabidopsis thaliana (Mouse-ear cress).